The chain runs to 265 residues: S-adenosylmethionine decarboxylase proenzyme (265 aa).

Ser114 (schiff-base intermediate with substrate; via pyruvic acid) is an active-site residue. Ser114 is subject to Pyruvic acid (Ser); by autocatalysis. The Proton acceptor; for processing activity role is filled by His119. Cys142 functions as the Proton donor; for catalytic activity in the catalytic mechanism.

Belongs to the prokaryotic AdoMetDC family. Type 2 subfamily. As to quaternary structure, heterooctamer of four alpha and four beta chains arranged as a tetramer of alpha/beta heterodimers. Pyruvate is required as a cofactor. Is synthesized initially as an inactive proenzyme. Formation of the active enzyme involves a self-maturation process in which the active site pyruvoyl group is generated from an internal serine residue via an autocatalytic post-translational modification. Two non-identical subunits are generated from the proenzyme in this reaction, and the pyruvate is formed at the N-terminus of the alpha chain, which is derived from the carboxyl end of the proenzyme. The post-translation cleavage follows an unusual pathway, termed non-hydrolytic serinolysis, in which the side chain hydroxyl group of the serine supplies its oxygen atom to form the C-terminus of the beta chain, while the remainder of the serine residue undergoes an oxidative deamination to produce ammonia and the pyruvoyl group blocking the N-terminus of the alpha chain.

The enzyme catalyses S-adenosyl-L-methionine + H(+) = S-adenosyl 3-(methylsulfanyl)propylamine + CO2. The protein operates within amine and polyamine biosynthesis; S-adenosylmethioninamine biosynthesis; S-adenosylmethioninamine from S-adenosyl-L-methionine: step 1/1. Catalyzes the decarboxylation of S-adenosylmethionine to S-adenosylmethioninamine (dcAdoMet), the propylamine donor required for the synthesis of the polyamines spermine and spermidine from the diamine putrescine. This Buchnera aphidicola subsp. Acyrthosiphon pisum (strain 5A) protein is S-adenosylmethionine decarboxylase proenzyme.